A 2059-amino-acid chain; its full sequence is Non-reducing polyketide synthase stmB (2059 aa).

One can recognise a Starter acyltransferase (SAT) domain in the interval 7–243 (LLFGDQTVEL…LKLAAYGAVH (237 aa)). Residues 366-796 (SNSIAIVGMA…GGNSCLILEE (431 aa)) form the Ketosynthase family 3 (KS3) domain. Residues Cys538, His673, and His713 each act as for beta-ketoacyl synthase activity in the active site. Residues 895-1185 (WVFSGQGSQY…CGSMVKATLG (291 aa)) enclose the Malonyl-CoA:ACP transacylase (MAT) domain. The tract at residues 1273–1413 (LHFVKKETVT…SASEWTDEWS (141 aa)) is N-terminal hotdog fold. Positions 1273 to 1581 (LHFVKKETVT…FQRMPRMVLH (309 aa)) constitute a PKS/mFAS DH domain. His1306 acts as the Proton acceptor; for dehydratase activity in catalysis. Residues 1435 to 1581 (GDHLRRPVVY…FQRMPRMVLH (147 aa)) are C-terminal hotdog fold. Asp1495 acts as the Proton donor; for dehydratase activity in catalysis. The region spanning 1619-1696 (PPKHDLADQL…DARRALGGDE (78 aa)) is the Carrier domain. The residue at position 1656 (Ser1656) is an O-(pantetheine 4'-phosphoryl)serine. Positions 1693-1727 (GGDETASESENDAEGDAPSDGGSPSGSWTPISPPE) are disordered. Acidic residues predominate over residues 1697-1709 (TASESENDAEGDA). The segment covering 1710–1719 (PSDGGSPSGS) has biased composition (low complexity). Residues 1778 to 2059 (AVEYKSNVVL…LGKLLQEAVA (282 aa)) are thioesterase (TE) domain.

Pantetheine 4'-phosphate is required as a cofactor.

It functions in the pathway mycotoxin biosynthesis. Functionally, non-reducing polyketide synthase; part of the gene cluster that mediates the biosynthesis of stromemycin, a depside C-glucoside with two unsaturated C9 side chains belonging to aromatic polyketide glycosides. The HR-PKS stmA and the NR-PKS stmB act as scaffold-generating enzymes responsible for the biosynthesis of the polyketide skeleton bininalkenylresorcylic acid. StmA condenses on acetyl-CoA starter unit with 4 malonyl-CoA units and the stmB uses 3 more malonyl-CoA units and catalyzes the depside bond formation. The glycoytransferase stmC then acts as the tailoring enzyme responsible for 3-C-glucosylation of bininalkenylresorcylic acid to yield stromemycin. The protein is Non-reducing polyketide synthase stmB of Aspergillus ustus.